The chain runs to 257 residues: Melatonin receptor type 1A (257 aa).

At 5–22 (LASIVNDGWSLSSLHCQL) the chain is on the extracellular side. Residues cysteine 20 and cysteine 97 are joined by a disulfide bond. The chain crosses the membrane as a helical span at residues 23–43 (SGFLMGLSVIGSVFNITGIAI). Over 44–64 (NRYCCICHSLRYNKLYSSTNS) the chain is Cytoplasmic. The chain crosses the membrane as a helical span at residues 65–85 (LCYVFLIWMLTLVAIVPNLCV). At 86-107 (GTLQYDPRIYSCTFTQSVSSAY) the chain is on the extracellular side. Residues 108-128 (TIAVVVFHFIVPMLVVIFCYL) form a helical membrane-spanning segment. Topologically, residues 129 to 160 (RIWALVLQVRWRVKPDNKPKLKPQDFRNFVTM) are cytoplasmic. A helical membrane pass occupies residues 161-181 (FVVFVLFAICWAPLNFIGLVV). Over 182 to 194 (ASEPASMAPRIPE) the chain is Extracellular. A helical transmembrane segment spans residues 195–215 (WLFVASYYMGYFNSCLNAIIY). The Cytoplasmic segment spans residues 216-257 (GLLNQNFRQEYRKIIVSLCTTKMFFVDSSNHVAHRIKRKPSP).

The protein belongs to the G-protein coupled receptor 1 family.

It is found in the cell membrane. In terms of biological role, high affinity receptor for melatonin. Likely to mediate the reproductive and circadian actions of melatonin. The activity of this receptor is mediated by pertussis toxin sensitive G proteins that inhibit adenylate cyclase activity. Possibly involved in sleep induction, by melatonin activation of the potassium channel KCNMA1/BK and the dissociation of G-beta and G-gamma subunits, thereby decreasing synaptic transmission. This chain is Melatonin receptor type 1A (MTNR1A), found in Bos taurus (Bovine).